The chain runs to 464 residues: V-type ATP synthase beta chain (464 aa).

It belongs to the ATPase alpha/beta chains family.

Produces ATP from ADP in the presence of a proton gradient across the membrane. The V-type beta chain is a regulatory subunit. The chain is V-type ATP synthase beta chain from Streptococcus gordonii (strain Challis / ATCC 35105 / BCRC 15272 / CH1 / DL1 / V288).